Reading from the N-terminus, the 150-residue chain is Small ribosomal subunit protein uS11 (150 aa).

It belongs to the universal ribosomal protein uS11 family. Part of the 30S ribosomal subunit. Interacts with proteins S7 and S18. Binds to IF-3.

Located on the platform of the 30S subunit, it bridges several disparate RNA helices of the 16S rRNA. Forms part of the Shine-Dalgarno cleft in the 70S ribosome. This is Small ribosomal subunit protein uS11 from Pelagibacter ubique (strain HTCC1062).